A 248-amino-acid polypeptide reads, in one-letter code: tRNA uridine(34) hydroxylase (248 aa).

In terms of domain architecture, Rhodanese spans 128-222; that stretch reads EGRPVVMLDT…YFEEVGGAHY (95 aa). The Cysteine persulfide intermediate role is filled by C182.

This sequence belongs to the TrhO family.

The enzyme catalyses uridine(34) in tRNA + AH2 + O2 = 5-hydroxyuridine(34) in tRNA + A + H2O. In terms of biological role, catalyzes oxygen-dependent 5-hydroxyuridine (ho5U) modification at position 34 in tRNAs. This is tRNA uridine(34) hydroxylase from Thiobacillus denitrificans (strain ATCC 25259 / T1).